Consider the following 269-residue polypeptide: HTH-type transcriptional activator ArnR (269 aa).

The Cytoplasmic segment spans residues 1–218; it reads MTKSLFDVLK…LLRLTNSYTL (218 aa). The segment at residues 39–62 is a DNA-binding region (H-T-H motif); that stretch reads TTEISQTINTSRKSIIDAIRKLVD. Residues 219 to 239 form a helical membrane-spanning segment; it reads EMANVKVMGFILISLPLLMYF. Over 240–242 the chain is Extracellular; it reads RDQ. Residues 243–263 traverse the membrane as a helical segment; that stretch reads LGLIELPWLYAVIFLALLSVF. The Cytoplasmic segment spans residues 264-269; the sequence is AQILSR.

The protein localises to the cell membrane. Involved in regulation of archaellar gene expression. Activates flaB transcription upon nutrient starvation by acting on the flaB promoter. In Sulfolobus acidocaldarius (strain ATCC 33909 / DSM 639 / JCM 8929 / NBRC 15157 / NCIMB 11770), this protein is HTH-type transcriptional activator ArnR.